The sequence spans 165 residues: Mating factor alpha-1 (165 aa).

The segment at residues 1-19 is a signal peptide (or 20); it reads MRFPSIFTAVLFAASSALA. Propeptides lie at residues 20 to 89, 105 to 110, 126 to 131, and 147 to 152; these read APVN…EAEA, EAEAEA, and EADAEA.

Its function is as follows. The active factor is excreted into the culture medium by haploid cells of the alpha mating type and acts on cells of the opposite mating type (type A). It mediates the conjugation process between the two types by inhibiting the initiation of DNA synthesis in type a cells and synchronizing them with type alpha. In Saccharomyces cerevisiae (strain ATCC 204508 / S288c) (Baker's yeast), this protein is Mating factor alpha-1 (MF(ALPHA)1).